We begin with the raw amino-acid sequence, 196 residues long: Imidazoleglycerol-phosphate dehydratase (196 aa).

The protein belongs to the imidazoleglycerol-phosphate dehydratase family.

It is found in the cytoplasm. It catalyses the reaction D-erythro-1-(imidazol-4-yl)glycerol 3-phosphate = 3-(imidazol-4-yl)-2-oxopropyl phosphate + H2O. Its pathway is amino-acid biosynthesis; L-histidine biosynthesis; L-histidine from 5-phospho-alpha-D-ribose 1-diphosphate: step 6/9. This Dehalococcoides mccartyi (strain ATCC BAA-2266 / KCTC 15142 / 195) (Dehalococcoides ethenogenes (strain 195)) protein is Imidazoleglycerol-phosphate dehydratase.